Consider the following 163-residue polypeptide: tRNA-acetylating toxin 2 (163 aa).

Residue tyrosine 137 is part of the active site.

This sequence belongs to the acetyltransferase family. GNAT subfamily. Homodimer. Forms a complex with cognate antitoxin TacA2.

The catalysed reaction is glycyl-tRNA(Gly) + acetyl-CoA = N-acetylglycyl-tRNA(Gly) + CoA + H(+). It carries out the reaction L-isoleucyl-tRNA(Ile) + acetyl-CoA = N-acetyl-L-isoleucyl-tRNA(Ile) + CoA + H(+). It catalyses the reaction L-leucyl-tRNA(Leu) + acetyl-CoA = N-acetyl-L-leucyl-tRNA(Leu) + CoA + H(+). In terms of biological role, toxic component of a type II toxin-antitoxin (TA) system. Acetylates tRNA and inhibits translation. Acetylates mainly Gly and Ile/Leu in vitro. Overexpression during the lag phase of a tacA2-tacT2 deletion strain leads to a 100-fold increase in persister cells in the presence of cefotaxime and a non-growth state in the absence of antibiotic. This protein, which has a single amino acid compared to S.typhimurium strain 14028s (Lys-29 is Glu in 14028s), produces 100-fold more persister cells, has much higher acetylation activity and binds tRNA much better. Persister cell formation and the growth defect are neutralized by cognate antitoxin TacA2. Its function is as follows. The TacA2-TacT2 complex both represses and derepresses expression of its own operon. The sequence is that of tRNA-acetylating toxin 2 from Salmonella enteritidis.